The chain runs to 315 residues: Ribose-phosphate pyrophosphokinase (315 aa).

ATP is bound by residues 37–39 (DGE) and 96–97 (RQ). Residues histidine 131 and aspartate 170 each coordinate Mg(2+). Lysine 194 is an active-site residue. D-ribose 5-phosphate-binding positions include arginine 196, aspartate 220, and 224–228 (DTGGT).

This sequence belongs to the ribose-phosphate pyrophosphokinase family. Class I subfamily. As to quaternary structure, homohexamer. Mg(2+) is required as a cofactor.

The protein localises to the cytoplasm. The catalysed reaction is D-ribose 5-phosphate + ATP = 5-phospho-alpha-D-ribose 1-diphosphate + AMP + H(+). It participates in metabolic intermediate biosynthesis; 5-phospho-alpha-D-ribose 1-diphosphate biosynthesis; 5-phospho-alpha-D-ribose 1-diphosphate from D-ribose 5-phosphate (route I): step 1/1. In terms of biological role, involved in the biosynthesis of the central metabolite phospho-alpha-D-ribosyl-1-pyrophosphate (PRPP) via the transfer of pyrophosphoryl group from ATP to 1-hydroxyl of ribose-5-phosphate (Rib-5-P). This is Ribose-phosphate pyrophosphokinase from Escherichia coli O6:H1 (strain CFT073 / ATCC 700928 / UPEC).